The following is a 228-amino-acid chain: Ran-binding protein 1 homolog a (228 aa).

Positions 1–13 are enriched in basic and acidic residues; that stretch reads MATNEPEHEHRDE. Disordered stretches follow at residues 1 to 30 and 159 to 228; these read MATNEPEHEHRDEEEAGANEDEDTGAQVAP and SEEE…GPST. Positions 14–24 are enriched in acidic residues; sequence EEAGANEDEDT. Residues 27-162 form the RanBD1 domain; that stretch reads QVAPIVRLEE…FKEVAESEEE (136 aa). The span at 179-228 shows a compositional bias: basic and acidic residues; sequence LTVEETKTEEKTEAKAVETAKTEVKAEEKKESEAEKSGEAKKTEESGPST.

Interacts with the GTP-bound form of RAN1, RAN2 and RAN3. As to expression, ubiquitous. Preferentially expressed in root tips and gynoecium.

It localises to the nucleus. The protein resides in the nuclear pore complex. In Arabidopsis thaliana (Mouse-ear cress), this protein is Ran-binding protein 1 homolog a (RANBP1A).